Reading from the N-terminus, the 521-residue chain is DNA damage-binding protein cmr1 (521 aa).

The disordered stretch occupies residues 36–75 (DKIIPKPAPPKPKRASTPRVKREPVKKEAARPTRQSSRLA). Residues 55–66 (VKREPVKKEAAR) are compositionally biased toward basic and acidic residues. 5 WD repeats span residues 183-224 (IVPQ…PKIE), 242-282 (THSR…STEI), 333-373 (LTDH…GKGD), 382-422 (EHES…EWKA), and 490-521 (DGIT…CLWM).

It belongs to the WD repeat DDB2/WDR76 family.

In terms of biological role, DNA-binding protein that binds to both single- and double-stranded DNA. Binds preferentially to UV-damaged DNA. May be involved in DNA-metabolic processes. In Neurospora crassa (strain ATCC 24698 / 74-OR23-1A / CBS 708.71 / DSM 1257 / FGSC 987), this protein is DNA damage-binding protein cmr1.